The chain runs to 130 residues: Ribosome-binding factor A (130 aa).

Belongs to the RbfA family. In terms of assembly, monomer. Binds 30S ribosomal subunits, but not 50S ribosomal subunits or 70S ribosomes.

The protein resides in the cytoplasm. Its function is as follows. One of several proteins that assist in the late maturation steps of the functional core of the 30S ribosomal subunit. Associates with free 30S ribosomal subunits (but not with 30S subunits that are part of 70S ribosomes or polysomes). Required for efficient processing of 16S rRNA. May interact with the 5'-terminal helix region of 16S rRNA. The sequence is that of Ribosome-binding factor A from Prochlorococcus marinus (strain MIT 9312).